A 323-amino-acid chain; its full sequence is Beta-ketoacyl-[acyl-carrier-protein] synthase III (323 aa).

Catalysis depends on residues cysteine 114 and histidine 250. The interval 251 to 255 (QANKR) is ACP-binding. Asparagine 280 is an active-site residue.

Belongs to the thiolase-like superfamily. FabH family. In terms of assembly, homodimer.

It is found in the cytoplasm. It catalyses the reaction malonyl-[ACP] + acetyl-CoA + H(+) = 3-oxobutanoyl-[ACP] + CO2 + CoA. Its pathway is lipid metabolism; fatty acid biosynthesis. Catalyzes the condensation reaction of fatty acid synthesis by the addition to an acyl acceptor of two carbons from malonyl-ACP. Catalyzes the first condensation reaction which initiates fatty acid synthesis and may therefore play a role in governing the total rate of fatty acid production. Possesses both acetoacetyl-ACP synthase and acetyl transacylase activities. Its substrate specificity determines the biosynthesis of branched-chain and/or straight-chain of fatty acids. In Hyphomonas neptunium (strain ATCC 15444), this protein is Beta-ketoacyl-[acyl-carrier-protein] synthase III.